Here is a 268-residue protein sequence, read N- to C-terminus: Proenkephalin-A (268 aa).

The first 24 residues, 1 to 24 (MARLLRLCTWLVALGPGLLATVQA), serve as a signal peptide directing secretion. 3 cysteine pairs are disulfide-bonded: cysteine 26/cysteine 48, cysteine 30/cysteine 52, and cysteine 33/cysteine 65. The interval 163–184 (TGDDRDRENHHQEGGDSDEGVS) is disordered. Over residues 164–176 (GDDRDRENHHQEG) the composition is skewed to basic and acidic residues. 2 consecutive propeptides follow at residues 197–208 (SPQVEDEAKELQ) and 218–228 (VGRPEWWMDYQ). Serine 252 bears the Phosphoserine mark.

This sequence belongs to the opioid neuropeptide precursor family. In terms of processing, proenkephalin-A is cleaved by CTSL to generate Met-enkephalin. Processed and degraded by ACE. Post-translationally, probably cleaved by ACE. In terms of processing, processed by ACE to generate Met-enkephalin in the nucleus accumbens of the brain. The N-terminal domain contains 6 conserved cysteines thought to be involved in disulfide bonding and/or processing.

The protein localises to the cytoplasmic vesicle. Its subcellular location is the secretory vesicle. It is found in the chromaffin granule lumen. It localises to the secreted. In terms of biological role, neuropeptide that competes with and mimic the effects of opiate drugs. They play a role in a number of physiologic functions, including pain perception and responses to stress. Met-enkephalin-Arg-Phe neuropeptide acts as a strong ligand of Mu-type opioid receptor OPRM1. Met-enkephalin-Arg-Phe-binding to OPRM1 in the nucleus accumbens of the brain increases activation of OPRM1, leading to long-term synaptic depression of glutamate release. Functionally, increases glutamate release in the striatum and decreases GABA concentration in the striatum. Its function is as follows. Increases glutamate release in the striatum. The protein is Proenkephalin-A (PENK) of Cavia porcellus (Guinea pig).